The sequence spans 347 residues: Quinolinate synthase (347 aa).

Iminosuccinate contacts are provided by H47 and S68. C113 lines the [4Fe-4S] cluster pocket. Iminosuccinate is bound by residues 139-141 (YAN) and S156. C200 lines the [4Fe-4S] cluster pocket. Iminosuccinate-binding positions include 226 to 228 (HPE) and T243. A [4Fe-4S] cluster-binding site is contributed by C297.

It belongs to the quinolinate synthase family. Type 1 subfamily. Requires [4Fe-4S] cluster as cofactor.

It is found in the cytoplasm. It carries out the reaction iminosuccinate + dihydroxyacetone phosphate = quinolinate + phosphate + 2 H2O + H(+). It participates in cofactor biosynthesis; NAD(+) biosynthesis; quinolinate from iminoaspartate: step 1/1. In terms of biological role, catalyzes the condensation of iminoaspartate with dihydroxyacetone phosphate to form quinolinate. The chain is Quinolinate synthase from Shigella flexneri.